Here is a 198-residue protein sequence, read N- to C-terminus: Recombination protein RecR (198 aa).

A C4-type zinc finger spans residues 57-72 (CSVCGHITDRDPCYIC). The region spanning 80-175 (SVVCVVQEPK…KVTRIAHGLP (96 aa)) is the Toprim domain.

This sequence belongs to the RecR family.

Its function is as follows. May play a role in DNA repair. It seems to be involved in an RecBC-independent recombinational process of DNA repair. It may act with RecF and RecO. This is Recombination protein RecR from Bacillus anthracis (strain A0248).